A 473-amino-acid chain; its full sequence is Photosystem II CP43 reaction center protein (473 aa).

A propeptide spanning residues 1–14 (MKTLYSLRRFYHVE) is cleaved from the precursor. The residue at position 15 (threonine 15) is an N-acetylthreonine. At threonine 15 the chain carries Phosphothreonine. Transmembrane regions (helical) follow at residues 69–93 (LFEV…PHLA), 134–155 (LLGP…KDRN), 178–200 (KALY…RKIA), 255–275 (KPFA…LSYS), and 291–312 (WFNN…ASQA). Residue glutamate 367 coordinates [CaMn4O5] cluster. A helical membrane pass occupies residues 447 to 471 (RARAAAAGFEKGIDRDFEPVLSMTP).

It belongs to the PsbB/PsbC family. PsbC subfamily. PSII is composed of 1 copy each of membrane proteins PsbA, PsbB, PsbC, PsbD, PsbE, PsbF, PsbH, PsbI, PsbJ, PsbK, PsbL, PsbM, PsbT, PsbX, PsbY, PsbZ, Psb30/Ycf12, at least 3 peripheral proteins of the oxygen-evolving complex and a large number of cofactors. It forms dimeric complexes. Requires Binds multiple chlorophylls and provides some of the ligands for the Ca-4Mn-5O cluster of the oxygen-evolving complex. It may also provide a ligand for a Cl- that is required for oxygen evolution. PSII binds additional chlorophylls, carotenoids and specific lipids. as cofactor.

The protein localises to the plastid membrane. In terms of biological role, one of the components of the core complex of photosystem II (PSII). It binds chlorophyll and helps catalyze the primary light-induced photochemical processes of PSII. PSII is a light-driven water:plastoquinone oxidoreductase, using light energy to abstract electrons from H(2)O, generating O(2) and a proton gradient subsequently used for ATP formation. The chain is Photosystem II CP43 reaction center protein from Cuscuta exaltata (Tall dodder).